Consider the following 305-residue polypeptide: U6 small nuclear RNA (adenine-(43)-N(6))-methyltransferase (305 aa).

5 residues coordinate S-adenosyl-L-methionine: R87, G112, E135, T166, and N188. Positions 197-221 (PNPLGGNTRNPERRPAPNNARTGSQ) are disordered.

It belongs to the methyltransferase superfamily. METTL16/RlmF family.

The enzyme catalyses adenosine in U6 snRNA + S-adenosyl-L-methionine = N(6)-methyladenosine in U6 snRNA + S-adenosyl-L-homocysteine + H(+). RNA N6-methyltransferase that mediates N6-methylation of adenine of U6 small nuclear RNA (U6 snRNA). The protein is U6 small nuclear RNA (adenine-(43)-N(6))-methyltransferase of Drosophila melanogaster (Fruit fly).